The sequence spans 228 residues: 5'-methylthioadenosine/S-adenosylhomocysteine nucleosidase (228 aa).

The Proton acceptor role is filled by Glu11. Residues Gly77, Ile151, and Met172–Glu173 each bind substrate. Asp196 acts as the Proton donor in catalysis.

It belongs to the PNP/UDP phosphorylase family. MtnN subfamily.

It carries out the reaction S-adenosyl-L-homocysteine + H2O = S-(5-deoxy-D-ribos-5-yl)-L-homocysteine + adenine. The catalysed reaction is S-methyl-5'-thioadenosine + H2O = 5-(methylsulfanyl)-D-ribose + adenine. The enzyme catalyses 5'-deoxyadenosine + H2O = 5-deoxy-D-ribose + adenine. It participates in amino-acid biosynthesis; L-methionine biosynthesis via salvage pathway; S-methyl-5-thio-alpha-D-ribose 1-phosphate from S-methyl-5'-thioadenosine (hydrolase route): step 1/2. In terms of biological role, catalyzes the irreversible cleavage of the glycosidic bond in both 5'-methylthioadenosine (MTA) and S-adenosylhomocysteine (SAH/AdoHcy) to adenine and the corresponding thioribose, 5'-methylthioribose and S-ribosylhomocysteine, respectively. Also cleaves 5'-deoxyadenosine, a toxic by-product of radical S-adenosylmethionine (SAM) enzymes, into 5-deoxyribose and adenine. In Staphylococcus aureus (strain JH1), this protein is 5'-methylthioadenosine/S-adenosylhomocysteine nucleosidase.